The sequence spans 742 residues: mRNA export factor ICP27 homolog (742 aa).

Over residues 1 to 11 (MELHSRGRHDA) the composition is skewed to basic and acidic residues. The disordered stretch occupies residues 1 to 202 (MELHSRGRHD…NHHGSSAGPQ (202 aa)). A compositionally biased stretch (basic residues) spans 72–85 (SHHHRPCVPARRPR). Residues 153–171 (KSYDNDDGEPHHHGGDSTH) are compositionally biased toward basic and acidic residues. The span at 179–202 (CPTTFGSSHPSSANNHHGSSAGPQ) shows a compositional bias: polar residues. Zn(2+) is bound by residues C387, H494, C496, and C501. A CHC2-type zinc finger spans residues 387–501 (CILDHQDGWG…QCHECQNEMC (115 aa)). Positions 540–742 (ASNHATAGGQ…MLCYSDDMDD (203 aa)) are disordered. Basic and acidic residues predominate over residues 578-587 (YDKKDREGSH). The span at 614-626 (GELEEDEDSDDAS) shows a compositional bias: acidic residues. A compositionally biased stretch (polar residues) spans 692 to 703 (QSANGNHSTTAT).

The protein belongs to the HHV-1 ICP27 protein family. Self-associates and forms high-molecular-mass complexes. Interacts with host DDX39A and DDX39B; these interactions are required for UL69 function in mRNA export. Interacts with host SUPT6H, EIF4A1 and PABPC1. Post-translationally, phosphorylated by UL97 and host CDK1, CDK7 and CD9. Phosphorylation by CDKs impacts on UL69 nuclear localization and activity.

It localises to the virion tegument. The protein resides in the virion. The protein localises to the host nucleus. It is found in the host cytoplasm. Functionally, immediate early (EI) protein that plays many roles during productive infection including regulation of host cell cycle progression, regulation of viral gene expression or nuclear export of intronless viral RNAs. Acts as a transcriptional transactivator via interaction with the cellular transcription elongation factor SUPT6H and as a nuclear RNA export factor via interaction with UAP56, a component of the cellular mRNA export machinery. The sequence is that of mRNA export factor ICP27 homolog from Human cytomegalovirus (strain Merlin) (HHV-5).